The primary structure comprises 576 residues: Proline--tRNA ligase (576 aa).

It belongs to the class-II aminoacyl-tRNA synthetase family. ProS type 1 subfamily. Homodimer.

It is found in the cytoplasm. It catalyses the reaction tRNA(Pro) + L-proline + ATP = L-prolyl-tRNA(Pro) + AMP + diphosphate. In terms of biological role, catalyzes the attachment of proline to tRNA(Pro) in a two-step reaction: proline is first activated by ATP to form Pro-AMP and then transferred to the acceptor end of tRNA(Pro). As ProRS can inadvertently accommodate and process non-cognate amino acids such as alanine and cysteine, to avoid such errors it has two additional distinct editing activities against alanine. One activity is designated as 'pretransfer' editing and involves the tRNA(Pro)-independent hydrolysis of activated Ala-AMP. The other activity is designated 'posttransfer' editing and involves deacylation of mischarged Ala-tRNA(Pro). The misacylated Cys-tRNA(Pro) is not edited by ProRS. The polypeptide is Proline--tRNA ligase (Leptospira interrogans serogroup Icterohaemorrhagiae serovar Lai (strain 56601)).